Consider the following 434-residue polypeptide: UDP-N-acetylmuramoylalanine--D-glutamate ligase (434 aa).

126–132 is a binding site for ATP; sequence GTSGKTT.

Belongs to the MurCDEF family.

It is found in the cytoplasm. The catalysed reaction is UDP-N-acetyl-alpha-D-muramoyl-L-alanine + D-glutamate + ATP = UDP-N-acetyl-alpha-D-muramoyl-L-alanyl-D-glutamate + ADP + phosphate + H(+). It participates in cell wall biogenesis; peptidoglycan biosynthesis. Cell wall formation. Catalyzes the addition of glutamate to the nucleotide precursor UDP-N-acetylmuramoyl-L-alanine (UMA). This chain is UDP-N-acetylmuramoylalanine--D-glutamate ligase, found in Desulfovibrio desulfuricans (strain ATCC 27774 / DSM 6949 / MB).